The following is a 1572-amino-acid chain: Dynein axonemal assembly factor 8 (1572 aa).

Disordered regions lie at residues 1-21, 262-304, 324-428, and 849-871; these read MASE…NWSG, SEEV…HPQS, SLEQ…EILQ, and FQNP…SDSE. Over residues 324–335 the composition is skewed to polar residues; that stretch reads SLEQNPENPSQR. Residues 336–351 are compositionally biased toward basic and acidic residues; it reads NEQKEKHHLNKTDHTG. The span at 361–374 shows a compositional bias: polar residues; that stretch reads NIQNDSLSDANMSN. Residues 409–426 show a composition bias toward basic and acidic residues; that stretch reads VGREEKDGREEQEKEKEI. Residues 849 to 865 show a composition bias toward polar residues; it reads FQNPYSRSTQPRSANLR. Positions 1249-1382 are NDK; it reads TVLLLKPRIW…IRDIKTFFPE (134 aa).

In terms of assembly, interacts with DNAI2. As to expression, expression is enriched in multiciliated cells in the epidermis and the nephrostomes of the pronephros.

The protein localises to the dynein axonemal particle. The protein resides in the cytoplasm. In cyliated cells, dynein axonemal particle-specific protein required for deployment of ODA to the axoneme. Interacts with outer dynein arm (ODA) subunits. This chain is Dynein axonemal assembly factor 8 (dnaaf8), found in Xenopus laevis (African clawed frog).